The chain runs to 103 residues: Regulator of rDNA transcription protein 1 (103 aa).

2 consecutive transmembrane segments (helical) span residues 9–33 (FLPS…WVLV) and 40–57 (VAFI…YTFF).

The protein resides in the membrane. Functionally, identified in a screen for mutants with decreased levels of rDNA transcription. This chain is Regulator of rDNA transcription protein 1 (RRT1), found in Saccharomyces cerevisiae (strain ATCC 204508 / S288c) (Baker's yeast).